A 235-amino-acid polypeptide reads, in one-letter code: tRNA (guanine-N(1)-)-methyltransferase (235 aa).

S-adenosyl-L-methionine-binding positions include G114 and 134-139 (IGDYIL).

This sequence belongs to the RNA methyltransferase TrmD family. In terms of assembly, homodimer.

It is found in the cytoplasm. It catalyses the reaction guanosine(37) in tRNA + S-adenosyl-L-methionine = N(1)-methylguanosine(37) in tRNA + S-adenosyl-L-homocysteine + H(+). Functionally, specifically methylates guanosine-37 in various tRNAs. In Ehrlichia ruminantium (strain Gardel), this protein is tRNA (guanine-N(1)-)-methyltransferase.